The chain runs to 239 residues: Peptidyl-tRNA hydrolase (239 aa).

Tyrosine 14 provides a ligand contact to tRNA. Histidine 19 functions as the Proton acceptor in the catalytic mechanism. TRNA-binding residues include phenylalanine 64, asparagine 66, and asparagine 112. The tract at residues 188 to 239 is disordered; the sequence is APPRSSTSKPKAQDNREDAAQAAEERSETRTPPEARPEDTRSALQKLADKFR. The span at 198–239 shows a compositional bias: basic and acidic residues; sequence KAQDNREDAAQAAEERSETRTPPEARPEDTRSALQKLADKFR.

The protein belongs to the PTH family. Monomer.

It is found in the cytoplasm. The catalysed reaction is an N-acyl-L-alpha-aminoacyl-tRNA + H2O = an N-acyl-L-amino acid + a tRNA + H(+). Functionally, hydrolyzes ribosome-free peptidyl-tRNAs (with 1 or more amino acids incorporated), which drop off the ribosome during protein synthesis, or as a result of ribosome stalling. Catalyzes the release of premature peptidyl moieties from peptidyl-tRNA molecules trapped in stalled 50S ribosomal subunits, and thus maintains levels of free tRNAs and 50S ribosomes. The sequence is that of Peptidyl-tRNA hydrolase from Jannaschia sp. (strain CCS1).